The chain runs to 228 residues: Probable septum site-determining protein MinC (228 aa).

It belongs to the MinC family. Interacts with MinD and FtsZ.

Functionally, cell division inhibitor that blocks the formation of polar Z ring septums. Rapidly oscillates between the poles of the cell to destabilize FtsZ filaments that have formed before they mature into polar Z rings. Prevents FtsZ polymerization. This is Probable septum site-determining protein MinC from Bacillus anthracis (strain A0248).